Reading from the N-terminus, the 357-residue chain is Zinc finger protein 830 (357 aa).

The C2H2-type zinc finger occupies 47–69; that stretch reads CVVCNIQIKSELLWPAHILGKQH. Disordered stretches follow at residues 98–126, 157–194, and 231–255; these read RKGS…TKLP, DDDE…ADRL, and ALPE…PKDQ. A compositionally biased stretch (basic and acidic residues) spans 99 to 115; sequence KGSEPENQESKRIKGTE. Positions 157 to 168 are enriched in acidic residues; that stretch reads DDDEVEGEEYEN. Positions 242–255 are enriched in basic and acidic residues; sequence ADAKVRKVDAPKDQ. Residues 279-325 adopt a coiled-coil conformation; the sequence is AEEDEEGRLDRQIDEIDEQIECYRRVEHLRDLKDTLQDAKMEVLKSK.

It localises to the nucleus. Its subcellular location is the chromosome. The protein localises to the nucleus speckle. Functionally, may act as an important regulator of the cell cycle that participates in the maintenance of genome integrity. In Xenopus tropicalis (Western clawed frog), this protein is Zinc finger protein 830.